The following is a 313-amino-acid chain: Tyrosine recombinase XerD (313 aa).

Positions 17-102 (EDNDVIIEQF…TLRRFFQYLY (86 aa)) constitute a Core-binding (CB) domain. One can recognise a Tyr recombinase domain in the interval 123–307 (RLPKDLSEQQ…ATERLKVLHQ (185 aa)). Active-site residues include arginine 163, lysine 187, histidine 259, arginine 262, and histidine 285. Tyrosine 294 serves as the catalytic O-(3'-phospho-DNA)-tyrosine intermediate.

It belongs to the 'phage' integrase family. XerD subfamily. As to quaternary structure, forms a cyclic heterotetrameric complex composed of two molecules of XerC and two molecules of XerD, in which XerC interacts with XerD via its C-terminal region, XerD interacts with XerC via its C-terminal region and so on.

It is found in the cytoplasm. Its activity is regulated as follows. FtsK may regulate the catalytic switch between XerC and XerD in the heterotetrameric complex during the two steps of the recombination process. Functionally, site-specific tyrosine recombinase, which acts by catalyzing the cutting and rejoining of the recombining DNA molecules. Binds cooperatively to specific DNA consensus sequences that are separated from XerC binding sites by a short central region, forming the heterotetrameric XerC-XerD complex that recombines DNA substrates. The complex is essential to convert dimers of the bacterial chromosome into monomers to permit their segregation at cell division. It also contributes to the segregational stability of plasmids. In the complex XerD specifically exchanges the bottom DNA strands. The chain is Tyrosine recombinase XerD from Proteus mirabilis.